We begin with the raw amino-acid sequence, 171 residues long: UPF0303 protein YPN_2129 (171 aa).

Belongs to the UPF0303 family.

In Yersinia pestis bv. Antiqua (strain Nepal516), this protein is UPF0303 protein YPN_2129.